We begin with the raw amino-acid sequence, 203 residues long: Recombination protein RecR (203 aa).

Residues 56–71 form a C4-type zinc finger; it reads CSVCGNVSDEERCRIC. The Toprim domain maps to 79–179; it reads SLVCVVEEPK…TVTRIASGLP (101 aa).

The protein belongs to the RecR family.

Functionally, may play a role in DNA repair. It seems to be involved in an RecBC-independent recombinational process of DNA repair. It may act with RecF and RecO. The sequence is that of Recombination protein RecR from Mycolicibacterium smegmatis (strain ATCC 700084 / mc(2)155) (Mycobacterium smegmatis).